Consider the following 883-residue polypeptide: Valine--tRNA ligase (883 aa).

The short motif at 51–61 is the 'HIGH' region element; it reads PNVTGKLHLGH. Positions 527 to 531 match the 'KMSKS' region motif; that stretch reads KMSKS. K530 is a binding site for ATP. Residues 811-847 are a coiled coil; it reads LEALIDLNVEIARLEKELEKWNKEVARVQGKLNNERF.

This sequence belongs to the class-I aminoacyl-tRNA synthetase family. ValS type 1 subfamily. Monomer.

The protein resides in the cytoplasm. It catalyses the reaction tRNA(Val) + L-valine + ATP = L-valyl-tRNA(Val) + AMP + diphosphate. Its function is as follows. Catalyzes the attachment of valine to tRNA(Val). As ValRS can inadvertently accommodate and process structurally similar amino acids such as threonine, to avoid such errors, it has a 'posttransfer' editing activity that hydrolyzes mischarged Thr-tRNA(Val) in a tRNA-dependent manner. This is Valine--tRNA ligase from Listeria monocytogenes serovar 1/2a (strain ATCC BAA-679 / EGD-e).